Here is a 94-residue protein sequence, read N- to C-terminus: Large ribosomal subunit protein bL28 (94 aa).

It belongs to the bacterial ribosomal protein bL28 family.

This Hyphomonas neptunium (strain ATCC 15444) protein is Large ribosomal subunit protein bL28.